The sequence spans 973 residues: MTSLSSQPAYTLVFDPSPSMETYSSTDFQKALEKGSDEQKIDTMKSILVTMLEGNPMPELLMHIIRFVMPSKNKELKKLLYFYWEIVPKLAEDGKLRHEMILVCNAIQHDLQHPNEYIRGNTLRFLTKLREAELLEQMVPSVLACLEYRHAYVRKYAILAVFSIFKVSEHLLPDAKEIINSFIVAETDPICKRNAFIGLAELDRENALHYLENNIADIENLDPLLQAVFVQFIRQDANRTPALKAQYIELLMELLSTTTSDEVIFETALALTVLSANPNVLVPAVNKLIDLAVKVSDNNIKLIVLDRIQDINANNVGALEELTLDILRVLNAEDLDVRSKALDISMDLATSRNAEDVVQLLKKELQTTVNNPDQDKAMQYRQLLIKTIRTVAVNFVEMAASVVSLLLDFIGDLNSVAASGIIAFIKEVIEKYPQLRANILENMVQTLDKVRSAKAYRGALWIMGEYAEGESEIQHCWKHIRNSVGEVPILQSEIKKLTQNQEHTEENEVDATAKPTGPVILPDGTYATESAFDVKTSQKSVTDEERDSRPPIRRFVLSGDFYTAAILANTIIKLVLKFENVSKNKTVINALKAEALLILVSIVRVGQSSLVEKKIDEDSLERVMTSISILLDEVNPEEKKEEVKLLEVAFLDTTKSSFKRQIEIAKKNKHKRALKDSCKNIEPIDTPISFRQFAGVDSTNVQKDSIEEDLQLAMKGDAIHATSSSSISKLKKIVPLCGFSDPVYAEACITNNQFDVVLDVLLVNQTKETLKNLHVQFATLGDLKIIDTPQKTNVIPHGFHKFTVTVKVSSADTGVIFGNIIYDGAHGEDARYVILNDVHVDIMDYIKPATADDEHFRTMWNAFEWENKISVKSQLPTLHAYLRELVKGTNMGILTPSESLGEDDCRFLSCNLYAKSSFGEDALANLCIEKDSKTNDVIGYVRIRSKGQGLALSLGDRVALIAKKTNKLALTHV.

2 HEAT repeats span residues 98–133 and 134–170; these read HEMILVCNAIQHDLQHPNEYIRGNTLRFLTKLREAE and LLEQMVPSVLACLEYRHAYVRKYAILAVFSIFKVSEH. At Ser-181 the chain carries Phosphoserine. 2 HEAT repeats span residues 279 to 317 and 318 to 354; these read NVLVPAVNKLIDLAVKVSDNNIKLIVLDRIQDINANNVG and ALEELTLDILRVLNAEDLDVRSKALDISMDLATSRNA. Residue Ser-540 is modified to Phosphoserine.

In terms of assembly, oligomeric complex that consists of at least the alpha, beta, beta', gamma, delta, epsilon and zeta subunits. The complex interacts with ARF1 and PAB1. Post-translationally, the N-terminus is blocked.

The protein resides in the cytoplasm. It is found in the golgi apparatus membrane. The protein localises to the cytoplasmic vesicle. Its subcellular location is the COPI-coated vesicle membrane. Its function is as follows. The coatomer is a cytosolic protein complex that binds to dilysine motifs and reversibly associates with Golgi non-clathrin-coated vesicles, which further mediate biosynthetic protein transport from the ER, via the Golgi up to the trans Golgi network. Coatomer complex is required for budding from Golgi membranes, and is essential for the retrograde Golgi-to-ER transport of dilysine-tagged proteins. Required for mitochondrial morphology. This Saccharomyces cerevisiae (strain ATCC 204508 / S288c) (Baker's yeast) protein is Coatomer subunit beta (SEC26).